The primary structure comprises 197 residues: dTTP/UTP pyrophosphatase (197 aa).

Aspartate 70 functions as the Proton acceptor in the catalytic mechanism.

Belongs to the Maf family. YhdE subfamily. As to quaternary structure, homodimer. Can also form homotetramers. The cofactor is a divalent metal cation.

Its subcellular location is the cytoplasm. It catalyses the reaction dTTP + H2O = dTMP + diphosphate + H(+). The catalysed reaction is UTP + H2O = UMP + diphosphate + H(+). The enzyme catalyses 5-methyl-UTP + H2O = 5-methyl-UMP + diphosphate + H(+). It carries out the reaction psi-UTP + H2O = psi-UMP + diphosphate + H(+). It catalyses the reaction 5-methyl-CTP + H2O = 5-methyl-CMP + diphosphate + H(+). Functionally, nucleoside triphosphate pyrophosphatase that hydrolyzes dTTP and UTP. Can also hydrolyze TTP and the modified nucleotides 5-methyl-UTP (m(5)UTP), pseudo-UTP and 5-methyl-CTP (m(5)CTP). Has weak activity with CTP. May have a dual role in cell division arrest and in preventing the incorporation of modified nucleotides into cellular nucleic acids. Important in maintenance of cell shape. The chain is dTTP/UTP pyrophosphatase (yhdE) from Escherichia coli (strain K12).